A 314-amino-acid polypeptide reads, in one-letter code: Ribosomal RNA small subunit methyltransferase H 2 (314 aa).

S-adenosyl-L-methionine is bound by residues 33 to 35 (AGH), aspartate 53, tyrosine 80, aspartate 101, and glutamine 108. Residues 293 to 314 (KELEENSRSKSAKLRVFEKNDL) are disordered.

It belongs to the methyltransferase superfamily. RsmH family.

Its subcellular location is the cytoplasm. The enzyme catalyses cytidine(1402) in 16S rRNA + S-adenosyl-L-methionine = N(4)-methylcytidine(1402) in 16S rRNA + S-adenosyl-L-homocysteine + H(+). Specifically methylates the N4 position of cytidine in position 1402 (C1402) of 16S rRNA. The sequence is that of Ribosomal RNA small subunit methyltransferase H 2 from Agathobacter rectalis (strain ATCC 33656 / DSM 3377 / JCM 17463 / KCTC 5835 / VPI 0990) (Eubacterium rectale).